The primary structure comprises 186 residues: Testis-expressed protein 36 (186 aa).

Residues 1–52 are disordered; sequence MTKGRRFNPPSDKDGRWFPHIGLTQKTPESITSATSKEPQSPHLPRQAEGKL. A compositionally biased stretch (polar residues) spans 24–39; sequence TQKTPESITSATSKEP.

This Homo sapiens (Human) protein is Testis-expressed protein 36 (TEX36).